Consider the following 432-residue polypeptide: Adenylosuccinate synthetase (432 aa).

GTP contacts are provided by residues 12–18 (GDEGKGK) and 40–42 (GHT). Aspartate 13 acts as the Proton acceptor in catalysis. 2 residues coordinate Mg(2+): aspartate 13 and glycine 40. Residues 13–16 (DEGK), 38–41 (NAGH), threonine 132, arginine 146, glutamine 226, threonine 241, and arginine 305 each bind IMP. Histidine 41 (proton donor) is an active-site residue. 301 to 307 (VVTGRKR) contacts substrate. GTP contacts are provided by residues arginine 307, 333 to 335 (KLD), and 415 to 417 (STS).

Belongs to the adenylosuccinate synthetase family. As to quaternary structure, homodimer. Mg(2+) is required as a cofactor.

The protein resides in the cytoplasm. The catalysed reaction is IMP + L-aspartate + GTP = N(6)-(1,2-dicarboxyethyl)-AMP + GDP + phosphate + 2 H(+). The protein operates within purine metabolism; AMP biosynthesis via de novo pathway; AMP from IMP: step 1/2. Functionally, plays an important role in the de novo pathway of purine nucleotide biosynthesis. Catalyzes the first committed step in the biosynthesis of AMP from IMP. This Rhizobium johnstonii (strain DSM 114642 / LMG 32736 / 3841) (Rhizobium leguminosarum bv. viciae) protein is Adenylosuccinate synthetase.